Reading from the N-terminus, the 179-residue chain is Coiled-coil domain-containing protein 32 (179 aa).

Positions 75-98 form a coiled coil; the sequence is EVYLASLEKKLRRIKGLNEEVTSK. The interval 157–179 is disordered; the sequence is FLIPPESQAEKPEARDEPAAAEQ. The segment covering 164-179 has biased composition (basic and acidic residues); sequence QAEKPEARDEPAAAEQ.

In terms of assembly, interacts with AP2S1; the interaction is direct and mediates association with adaptor protein complex 2 (AP-2).

It is found in the membrane. Its subcellular location is the coated pit. Functionally, regulates clathrin-mediated endocytsois of cargos such as transferrin probably through the association and modulation of adaptor protein complex 2 (AP-2). Has a role in ciliogenesis. Required for proper cephalic and left/right axis development. The protein is Coiled-coil domain-containing protein 32 (Ccdc32) of Rattus norvegicus (Rat).